Here is a 261-residue protein sequence, read N- to C-terminus: Putative hydro-lyase Sfum_3393 (261 aa).

Belongs to the D-glutamate cyclase family.

This is Putative hydro-lyase Sfum_3393 from Syntrophobacter fumaroxidans (strain DSM 10017 / MPOB).